Here is a 596-residue protein sequence, read N- to C-terminus: DNA primase (596 aa).

Residues 41-65 (CPFHHEKTPSFSVSQDKQIYKCFGC) form a CHC2-type zinc finger. Residues 255–336 (DTIIIVEGYM…DIKIIKIPDG (82 aa)) enclose the Toprim domain. The Mg(2+) site is built by glutamate 261, aspartate 305, and aspartate 307.

It belongs to the DnaG primase family. As to quaternary structure, monomer. Interacts with DnaB. Zn(2+) serves as cofactor. Mg(2+) is required as a cofactor.

It carries out the reaction ssDNA + n NTP = ssDNA/pppN(pN)n-1 hybrid + (n-1) diphosphate.. Functionally, RNA polymerase that catalyzes the synthesis of short RNA molecules used as primers for DNA polymerase during DNA replication. This is DNA primase from Clostridium acetobutylicum (strain ATCC 824 / DSM 792 / JCM 1419 / IAM 19013 / LMG 5710 / NBRC 13948 / NRRL B-527 / VKM B-1787 / 2291 / W).